The chain runs to 542 residues: Probable myosin-binding protein 6 (542 aa).

The N-terminal stretch at 1–21 (MYIQLLCFFLFLFLLLQATMS) is a signal peptide. A helical transmembrane segment spans residues 39 to 59 (FLIYTVLEWSLIVFLFIDGVI). The tract at residues 219–239 (SFLAPAPSPRVSHNKLSENES) is disordered. Residues 300–398 (SILNQLKKEV…ELEAEFEVYR (99 aa)) form the GTD-binding domain. The tract at residues 419-480 (GNASAYDDCQ…DEEKGSESKE (62 aa)) is disordered. The span at 437–456 (AVSSSNQQENGENIDQNGQS) shows a compositional bias: polar residues. Residues 471-480 (DEEKGSESKE) show a composition bias toward basic and acidic residues.

It is found in the membrane. In terms of biological role, probable membrane-anchored myosin receptors. This Arabidopsis thaliana (Mouse-ear cress) protein is Probable myosin-binding protein 6.